The primary structure comprises 215 residues: Putative B3 domain-containing protein Os11g0625400 (215 aa).

Residues 1 to 51 (MTVELEKIAGSFFISKGWKTFVHRTGLLSGQYIRFQVLTPSKINVLLFDKK) constitute a DNA-binding region (TF-B3 1). Residues 92-117 (SHTSNKETSSDSRTESMTDIPSSSDN) form a disordered region. Over residues 95-107 (SNKETSSDSRTES) the composition is skewed to basic and acidic residues. A compositionally biased stretch (polar residues) spans 108-117 (MTDIPSSSDN). The segment at residues 123–215 (DIKNYISIIG…PNVKITIDVL (93 aa)) is a DNA-binding region (TF-B3 2).

It localises to the nucleus. This chain is Putative B3 domain-containing protein Os11g0625400, found in Oryza sativa subsp. japonica (Rice).